The following is a 138-amino-acid chain: Transcriptional activator protein Pur-alpha (138 aa).

At S70 the chain carries Phosphoserine.

This sequence belongs to the PUR DNA-binding protein family. Homodimer, heterodimer with PURB and heterotrimer with PURB and YBX1/Y-box protein 1. Interacts with FMR1; this interaction occurs in association with polyribosome.

It localises to the nucleus. Its function is as follows. This is a probable transcription activator that specifically binds the purine-rich single strand of the PUR element located upstream of the c-Myc gene. May play a role in the initiation of DNA replication and in recombination. The polypeptide is Transcriptional activator protein Pur-alpha (Rattus norvegicus (Rat)).